The primary structure comprises 364 residues: FK506-binding protein 4 (364 aa).

2 disordered regions span residues serine 92–isoleucine 148 and glutamate 168–proline 239. Residues phenylalanine 94–isoleucine 148 show a composition bias toward acidic residues. Positions glutamate 168 to valine 184 are enriched in basic and acidic residues. The segment covering lysine 185–proline 239 has biased composition (low complexity). A PPIase FKBP-type domain is found at glycine 277–alanine 363.

The protein belongs to the FKBP-type PPIase family. As to quaternary structure, binds to histones H3 and H4.

It localises to the nucleus. It carries out the reaction [protein]-peptidylproline (omega=180) = [protein]-peptidylproline (omega=0). Inhibited by both FK506 and rapamycin. Functionally, PPIase that acts as a histone chaperone. Histone proline isomerase that increases the rate of cis-trans isomerization at prolines on the histone H3 N-terminal tail. Proline isomerization influences H3 methylation thereby regulating gene expression. The chain is FK506-binding protein 4 (fkbp4) from Dictyostelium discoideum (Social amoeba).